A 594-amino-acid polypeptide reads, in one-letter code: MLPRTKYNRFRNDSVTSVDDLLHSLSVSGGGGKVSAARATPAAAPYLVSGEALRKAPDDGPGSLGHLLHKVSHLKLSSSGLRGLSSAARERAGARLSGSCSAPSLAAPDGSAPSAPRAPAMSAARKGRPGDEPLPRPPRGAPHASDQVLGPGVTYVVKYLGCIEVLRSMRSLDFSTRTQITREAISRVCEAVPGAKGAFKKRKPPSKMLSSILGKSNLQFAGMSISLTISTASLNLRTPDSKQIIANHHMRSISFASGGDPDTTDYVAYVAKDPVNRRACHILECCDGLAQDVIGSIGQAFELRFKQYLQCPTKIPALHDRMQSLDEPWTEEEGDGSDHPYYNSIPSKMPPPGGFLDTRLKPRPHAPDTAQFAGKEQTYYQGRHLGDTFGEDWQQTPLRQGSSDIYSTPEGKLHVAPTGEAPTYVNTQQIPPQAWPAAVSSAESSPRKDLFDMKPFEDALKNQPLGPVLSKAASVECISPVSPRAPDAKMLEELQAETWYQGEMSRKEAEGLLEKDGDFLVRKSTTNPGSFVLTGMHNGQAKHLLLVDPEGTIRTKDRVFDSISHLINHHLESSLPIVSAGSELCLQQPVERKQ.

The interval 98–147 is disordered; it reads GSCSAPSLAAPDGSAPSAPRAPAMSAARKGRPGDEPLPRPPRGAPHASDQ. Low complexity predominate over residues 101–124; the sequence is SAPSLAAPDGSAPSAPRAPAMSAA. Residues 149–334 enclose the PID domain; the sequence is LGPGVTYVVK…LDEPWTEEEG (186 aa). A CH1 region spans residues 335-498; sequence DGSDHPYYNS…KMLEELQAET (164 aa). Disordered regions lie at residues 351–373 and 386–405; these read PPGG…AQFA and GDTF…SSDI. A compositionally biased stretch (polar residues) spans 393–405; the sequence is WQQTPLRQGSSDI. S402 carries the phosphoserine modification. The SH2 domain occupies 499-590; it reads WYQGEMSRKE…GSELCLQQPV (92 aa).

Interacts with the Trk receptors in a phosphotyrosine-dependent manner. Once activated, binds to GRB2. Interacts with activated EGF receptors. Tyrosine phosphorylated. As to expression, mainly expressed in brain. Hardly detectable in other tissues, except in pancreas. Highly expressed in the cerebral cortex, frontal and temporal lobes, occipital pole, hippocampus, caudate nucleus and amygdala. Expressed at low level in the cerebellum, medulla and spinal cord.

Its function is as follows. Signaling adapter that couples activated growth factor receptors to signaling pathway in neurons. Involved in the signal transduction pathways of neurotrophin-activated Trk receptors in cortical neurons. The sequence is that of SHC-transforming protein 3 (SHC3) from Homo sapiens (Human).